We begin with the raw amino-acid sequence, 207 residues long: MHKIINHPLIKDKLTRMRKVSTVSTVFRTNLEELTQLMVYEATKDLELNEIEIETPVVKVAKGYKLKNKICLIPILRAGIGMVDGVKSLIPTATIGHIGLYRNEQTLKPVEYFKKFPKNISESDVIILDPMLATGGSVVEAVNIIKKYNPKSIKFVCIVAAPEGLKYVQEVHPEVDVYIAALDDKLNENGYITPGLGDAGDRIFGTK.

Residues R77, R102, and 129–137 (DPMLATGGS) each bind 5-phospho-alpha-D-ribose 1-diphosphate. Residues I192 and 197–199 (GDA) each bind uracil. D198 provides a ligand contact to 5-phospho-alpha-D-ribose 1-diphosphate.

This sequence belongs to the UPRTase family. Requires Mg(2+) as cofactor.

The catalysed reaction is UMP + diphosphate = 5-phospho-alpha-D-ribose 1-diphosphate + uracil. It participates in pyrimidine metabolism; UMP biosynthesis via salvage pathway; UMP from uracil: step 1/1. With respect to regulation, allosterically activated by GTP. Catalyzes the conversion of uracil and 5-phospho-alpha-D-ribose 1-diphosphate (PRPP) to UMP and diphosphate. In Ureaplasma parvum serovar 3 (strain ATCC 27815 / 27 / NCTC 11736), this protein is Uracil phosphoribosyltransferase.